Here is a 68-residue protein sequence, read N- to C-terminus: Conotoxin Em11.5 (68 aa).

Positions 1-26 (MMFRLTSVGCFLLVIACLNLFQVVLT) are cleaved as a signal peptide. 4 disulfides stabilise this stretch: Cys-29-Cys-43, Cys-36-Cys-48, Cys-42-Cys-52, and Cys-47-Cys-56. The residue at position 60 (Phe-60) is a Phenylalanine amide. A propeptide spanning residues 64–68 (ATFQE) is cleaved from the precursor.

Belongs to the conotoxin I2 superfamily. Expressed by the venom duct.

It localises to the secreted. The protein is Conotoxin Em11.5 of Conus emaciatus (False virgin cone).